The chain runs to 1624 residues: MHSVYTKYTIILILLVIYQGLPTNTQVASRIFGVGSKSSGPLYRQLIDIYSYTYDNAVFIFEDLPIDVILTQVDYIDYVGLDRCISHEYEEIFNLVQFPLAGQAIVMTYNIPELANLDTRIVIDRQTLGKIWTGEISKWNHPDIIALNPTLNGTLPDKEIKLGYNDDGNVSISGIVQAALSSFYGNFATEFNNAGQLFANMSFANESRCVNIGPSSRERFDWVKNTTYSLTFVNYADVFNNTNPNISVMNMYNKAGNLVEPSLESVQFAMADFKDEYSNNNFALDVFDAPGNNSWPLSYVNYIVMSKRFFQLDCSRADVVLKFIAWVYTNTAASKALTQNQFYPLDNTLKKVSIDNIYIVKCNNVSVSEQQYLISFGGSTSIVPSWLTAFTSGSIVAKYYSTLSSNSIELLTTHGCDFAVTINGVDQKFYQEIEDLAVMPLAAFSIVPAYNIPEIVGKTLVLDIDVIVKIYLGEITNWNDTKIRNLNPEISNYLPNAIINVVVQNIESDINQIFTKFLSQESEIFSQEIGQTYNPDLSLFNSSVIFVDDIDGLGDELIDNKYSFGFWTDFGVRLLSRVQTVQMASLKINDDIIEPNYDTLKNAISSESNQIARSTNSNVWPITSMISIVYPETTMKNKDKAVAIAEFMYWTQYDPLAINSANNKGYYLASSDPQLRSVVLDLLKNFKFEDESVSSYANCIYQGSICSNFGTCIESACICNSSRTGTYCEKIITDSENNTLIIILATVIPIACIFGLLLLTLLIVIIFLLKHRNTTNNDWEIDFSELEIGETLGTGGYGEVYKSIWKGTEVAVKLISSKHVSKDMERSFFEEVKIMTSLRHPNVVLFMAASTKSPNMCIVMEFMSLGSLYDLLGNELIPEIPYALKIKMAYQASKGMHFLHSSGIVHRDLKSLNLLLDSKWNVKVSDFGLTKVKSELDKKKTNDNIIGTIHWIAPEILNDSTEVDYILADVYSFGIILWELLTREQPYKGMTPAAIAVSVIRDGMRPPISDEAVTAHSIEYIDLIKQCWHSDTIIRPTFLEIMTRLSNILGDSSNMTSGTSSSSLSSGGIGKSITDSKSSNSRSSVESSNTSNTFRGIDRHNSHPTGEVTVAFIDIISASKLWEYDPDGMCESTKMYNEIIRRVTKKYGGYESFISKDRNSGEGSFCLVFSDAIQAINSCEEMQLQLLNANWPKKILQHPAAAEEFDRTDQLIFRGLRVRMALHCGSVKISQDPMTRKYQYSGSTVNITGKITTLTHGGQIIVSENLYQKVNNDFTFITVGKIDIPDYPSKMTLYEIKFEILKNRFFGGITYVNYNDDTDSGTADDSNYDSGKIIDIDYMADIDKEDSFLTSANMCRWIINYDEISIGKQIGLGSYGIVFNGKWKGVDVAVKKFVKQKLSETQLLEFRAEMAFLSELKHSNIVTFIGACIKKPNICIVTEYMRMGNLRDVLKNPDIKITFANKLKLLYGAAMGIDYLHSSNPMIVHRDIKPANILVDEHFNVKIADFGFARIKEDNTTMTRCGTPCWTAPEVIRGEKYCEKADVFSFGVVMWEVLTGKEPFAECNFMKVSLDILEGGRPIIPSDCPHEFAKLIKKCWHAKAHKRPTMTEVVQQLMLITEQFDHKV.

The signal sequence occupies residues 1-25 (MHSVYTKYTIILILLVIYQGLPTNT). Residues Asn152, Asn169, Asn200, Asn205, Asn225, Asn240, Asn245, Asn292, Asn364, Asn479, Asn541, Asn720, and Asn737 are each glycosylated (N-linked (GlcNAc...) asparagine; by host). Residues 747–767 (VIPIACIFGLLLLTLLIVIIF) form a helical membrane-spanning segment. The Protein kinase 1 domain occupies 786–1049 (LEIGETLGTG…EIMTRLSNIL (264 aa)). ATP-binding positions include 792 to 800 (LGTGGYGEV) and Lys813. Residue Asp908 is the Proton acceptor of the active site. Residues 1054-1093 (NMTSGTSSSSLSSGGIGKSITDSKSSNSRSSVESSNTSNT) show a composition bias toward low complexity. Positions 1054 to 1101 (NMTSGTSSSSLSSGGIGKSITDSKSSNSRSSVESSNTSNTFRGIDRHN) are disordered. The Guanylate cyclase domain occupies 1109-1252 (TVAFIDIISA…STVNITGKIT (144 aa)). One can recognise a Protein kinase 2 domain in the interval 1364-1615 (ISIGKQIGLG…MTEVVQQLML (252 aa)). ATP is bound by residues 1370–1378 (IGLGSYGIV) and Lys1391. Asp1487 (proton acceptor) is an active-site residue.

The protein localises to the membrane. The enzyme catalyses L-seryl-[protein] + ATP = O-phospho-L-seryl-[protein] + ADP + H(+). The catalysed reaction is L-threonyl-[protein] + ATP = O-phospho-L-threonyl-[protein] + ADP + H(+). This Acanthamoeba polyphaga (Amoeba) protein is Putative serine/threonine-protein kinase/receptor R831.